A 328-amino-acid chain; its full sequence is L-lactate dehydrogenase (328 aa).

NAD(+) contacts are provided by residues V18, E39, K46, Y71, and 85–86; that span reads GA. Positions 88 and 94 each coordinate substrate. Residues S107, 124–126, and S149 each bind NAD(+); that span reads AAN. 126-129 contributes to the substrate binding site; the sequence is NPVD. 154-157 serves as a coordination point for substrate; that stretch reads DSAR. Residues R159 and H174 each coordinate beta-D-fructose 1,6-bisphosphate. H181 (proton acceptor) is an active-site residue. Position 226 is a phosphotyrosine (Y226). Residue T235 participates in substrate binding.

The protein belongs to the LDH/MDH superfamily. LDH family. In terms of assembly, homotetramer.

It is found in the cytoplasm. The catalysed reaction is (S)-lactate + NAD(+) = pyruvate + NADH + H(+). It participates in fermentation; pyruvate fermentation to lactate; (S)-lactate from pyruvate: step 1/1. With respect to regulation, allosterically activated by fructose 1,6-bisphosphate (FBP). Functionally, catalyzes the conversion of lactate to pyruvate. This chain is L-lactate dehydrogenase, found in Streptococcus sanguinis (strain SK36).